The following is an 81-amino-acid chain: Beta-toxin Ct13 (81 aa).

The N-terminal stretch at 1 to 18 (MKVLILIIASVLLIGVEC) is a signal peptide. Positions 19 to 78 (KDGFPVDSEGCILLPCATRAYCSVNCKFMKGSGGSCDTLACHCKGLPEDAKVQDKPTNKC) constitute an LCN-type CS-alpha/beta domain. Cystine bridges form between cysteine 29/cysteine 78, cysteine 34/cysteine 54, cysteine 40/cysteine 59, and cysteine 44/cysteine 61. Cysteine 78 bears the Cysteine amide mark.

This sequence belongs to the long (4 C-C) scorpion toxin superfamily. Sodium channel inhibitor family. Beta subfamily. Expressed by the venom gland.

Its subcellular location is the secreted. Functionally, beta toxins bind voltage-independently at site-4 of sodium channels (Nav) and shift the voltage of activation toward more negative potentials thereby affecting sodium channel activation and promoting spontaneous and repetitive firing. This is Beta-toxin Ct13 from Centruroides tecomanus (Scorpion).